The following is a 491-amino-acid chain: MKNQDQALIFEVTKEGRVGYSLPKLDVEEVKLEDVFESDYIRVEDAELPEVSELDIMRHYTALSNRNHGVDSGFYPLGSCTMKYNPKINESVARFAGFANIHPLQDEKTVQGAMELMYDLQEHLIEITGMDTVTLQPAAGAHGEWTGLMLIRAYHEANGDFNRTKVIVPDSAHGTNPASATVAGFETITVKSNENGLVDLEDLKRVVNEETAALMLTNPNTLGLFEENILEMAEIVHNAGGKLYYDGANLNAVLSQARPGDMGFDVVHLNLHKTFTGPHGGGGPGSGPVGVKADLIPYLPKPILEKTENGYHFNYDRPEAIGRVKPFYGNFGINVRAYTYIRSMGPDGLRAVTEYAVLNANYMMRRLAPFYDLPFNRHCKHEFVLSGRRQKKLGVRTLDIAKRLLDFGYHPPTIYFPLNVEECIMIEPTETESKETLDGFIDKMIQIAKEVEENPEVVQEAPHTTVIKRLDETMAARKPVLRYAKPAPVQV.

At Lys273 the chain carries N6-(pyridoxal phosphate)lysine.

It belongs to the GcvP family. C-terminal subunit subfamily. The glycine cleavage system is composed of four proteins: P, T, L and H. In this organism, the P 'protein' is a heterodimer of two subunits. Pyridoxal 5'-phosphate serves as cofactor.

It carries out the reaction N(6)-[(R)-lipoyl]-L-lysyl-[glycine-cleavage complex H protein] + glycine + H(+) = N(6)-[(R)-S(8)-aminomethyldihydrolipoyl]-L-lysyl-[glycine-cleavage complex H protein] + CO2. In terms of biological role, the glycine cleavage system catalyzes the degradation of glycine. The P protein binds the alpha-amino group of glycine through its pyridoxal phosphate cofactor; CO(2) is released and the remaining methylamine moiety is then transferred to the lipoamide cofactor of the H protein. In Bacillus cereus (strain G9842), this protein is Probable glycine dehydrogenase (decarboxylating) subunit 2.